The primary structure comprises 309 residues: Carbonic anhydrase 4 (309 aa).

An N-terminal signal peptide occupies residues 1–17 (MQLLLALLALAYVAPST). Residues 20 to 282 (SHWCYEIQAK…LGNRQVFRSH (263 aa)) enclose the Alpha-carbonic anhydrase domain. 2 disulfides stabilise this stretch: Cys23-Cys35 and Cys45-Cys226. The active-site Proton donor/acceptor is the His87. Zn(2+) contacts are provided by His114, His116, and His139. Asn193 carries N-linked (GlcNAc...) asparagine glycosylation. 222–223 (TT) serves as a coordination point for substrate. Residue Ser281 is the site of GPI-anchor amidated serine attachment. The propeptide at 282–309 (HASGRLLSLPLPTLLVPTLTCLVASFLH) is removed in mature form.

The protein belongs to the alpha-carbonic anhydrase family. As to quaternary structure, interacts with SLC4A4. The cofactor is Zn(2+). Post-translationally, the N-terminus is blocked. Glycosylated. Present in kidney and lung. Also particularly abundant in brain, muscle, heart and liver. Not detected in skin or spleen.

It localises to the cell membrane. The catalysed reaction is hydrogencarbonate + H(+) = CO2 + H2O. Its activity is regulated as follows. Inhibited by acetazolamide. Functionally, catalyzes the reversible hydration of carbon dioxide into bicarbonate and protons and thus is essential to maintaining intracellular and extracellular pH. May stimulate the sodium/bicarbonate transporter activity of SLC4A4 that acts in pH homeostasis. It is essential for acid overload removal from the retina and retina epithelium, and acid release in the choriocapillaris in the choroid. The chain is Carbonic anhydrase 4 (Ca4) from Rattus norvegicus (Rat).